We begin with the raw amino-acid sequence, 512 residues long: Colistin resistance protein EmrB (512 aa).

14 helical membrane-spanning segments follow: residues 17–37 (WAIF…IQIV), 55–75 (VTWV…MSSI), 84–104 (VYYT…ALSW), 115–135 (IQGF…YLLF), 144–164 (LVMF…IGGW), 169–189 (FSWH…ATVI), 205–225 (SMDW…EYFL), 234–254 (LADT…MIFF), 280–300 (ITTF…PVFL), 314–334 (VMMV…WLIP), 341–361 (TVFV…HLSI), 376–396 (GIGL…TLPL), 412–432 (IGGA…TAMH), and 486–506 (FNDL…LTIF).

Belongs to the major facilitator superfamily. EmrB family.

It is found in the cell inner membrane. Its function is as follows. Probably part of an efflux pump system that contributes to adaptation to osmotic stress and resistance to colistin. This Acinetobacter baumannii (strain ATCC 17978 / DSM 105126 / CIP 53.77 / LMG 1025 / NCDC KC755 / 5377) protein is Colistin resistance protein EmrB.